The sequence spans 431 residues: Glutamate-1-semialdehyde 2,1-aminomutase (431 aa).

The residue at position 269 (Lys-269) is an N6-(pyridoxal phosphate)lysine.

The protein belongs to the class-III pyridoxal-phosphate-dependent aminotransferase family. HemL subfamily. In terms of assembly, homodimer. Requires pyridoxal 5'-phosphate as cofactor.

Its subcellular location is the cytoplasm. It carries out the reaction (S)-4-amino-5-oxopentanoate = 5-aminolevulinate. It participates in porphyrin-containing compound metabolism; protoporphyrin-IX biosynthesis; 5-aminolevulinate from L-glutamyl-tRNA(Glu): step 2/2. Its pathway is porphyrin-containing compound metabolism; chlorophyll biosynthesis. The protein is Glutamate-1-semialdehyde 2,1-aminomutase of Chlorobaculum tepidum (strain ATCC 49652 / DSM 12025 / NBRC 103806 / TLS) (Chlorobium tepidum).